The sequence spans 128 residues: Large ribosomal subunit protein bL12 (128 aa).

Belongs to the bacterial ribosomal protein bL12 family. Homodimer. Part of the ribosomal stalk of the 50S ribosomal subunit. Forms a multimeric L10(L12)X complex, where L10 forms an elongated spine to which 2 to 4 L12 dimers bind in a sequential fashion. Binds GTP-bound translation factors.

Functionally, forms part of the ribosomal stalk which helps the ribosome interact with GTP-bound translation factors. Is thus essential for accurate translation. In Kineococcus radiotolerans (strain ATCC BAA-149 / DSM 14245 / SRS30216), this protein is Large ribosomal subunit protein bL12.